Here is a 383-residue protein sequence, read N- to C-terminus: Meiotic recombination protein SPO11-2 (383 aa).

The Topo IIA-type catalytic domain occupies 24 to 167 (LLPHEARARI…LGIMASSRGL (144 aa)). Y124 acts as the O-(5'-phospho-DNA)-tyrosine intermediate in catalysis. Residues E217 and D270 each contribute to the Mg(2+) site.

The protein belongs to the TOP6A family. As to quaternary structure, heterotetramer of 2 SPO11 (SPO11-1 and/or SPO11-2) and 2 MTOPVIB chains. Interacts with MTOPVIB. May form a heterodimer with SPO11-1. Interacts with PRD1. Does not interact with TOP6B. The cofactor is Mg(2+). In terms of tissue distribution, very low expression in flowers and shoots.

It localises to the nucleus. It carries out the reaction ATP-dependent breakage, passage and rejoining of double-stranded DNA.. Its function is as follows. Component of a topoisomerase 6 complex specifically required for meiotic recombination. Together with MTOPVIB, mediates DNA cleavage that forms the double-strand breaks (DSB) that initiate meiotic recombination. The complex promotes relaxation of negative and positive supercoiled DNA and DNA decatenation through cleavage and ligation cycles. The sequence is that of Meiotic recombination protein SPO11-2 (SPO11-2) from Arabidopsis thaliana (Mouse-ear cress).